Here is a 298-residue protein sequence, read N- to C-terminus: MDNAGKEREAVQLMAEAEKRVKASHSFLRGLFGGNTRIEEACEMYTRAANMFKMAKNWSAAGNAFCQAAKLHMQLQSKHDSATSFVDAGNAYKKADPQEAINCLNAAIDIYTDMGRFTIAAKHHITIAEIYETELVDIEKAIAHYEQSADYYKGEESNSSANKCLLKVAAYAAQLEQYQKAIEIFEQIGANTMDNPLLKYSAKDYFFKAALCHFIVDELNAKLALEKYEEMFPAFTDSRECKLLKKLLEAHEEQNSEAYTEAVKEFDSISRLDQWLTTMLLRIKKSIQGDGEGDGDLK.

The protein belongs to the SNAP family. In terms of assembly, interacts with PRKCABP, and disrupts the interaction between GRIA2 and PRKCABP, leading to the internalization of GRIA2. Brain.

The protein resides in the membrane. Functionally, required for vesicular transport between the endoplasmic reticulum and the Golgi apparatus. The polypeptide is Beta-soluble NSF attachment protein (NAPB) (Bos taurus (Bovine)).